Consider the following 232-residue polypeptide: Small ribosomal subunit protein uS3 (232 aa).

Residues 39-107 (VRQYLTKALK…PAQINIAEVR (69 aa)) enclose the KH type-2 domain.

Belongs to the universal ribosomal protein uS3 family. In terms of assembly, part of the 30S ribosomal subunit. Forms a tight complex with proteins S10 and S14.

In terms of biological role, binds the lower part of the 30S subunit head. Binds mRNA in the 70S ribosome, positioning it for translation. This chain is Small ribosomal subunit protein uS3, found in Pseudoalteromonas atlantica (strain T6c / ATCC BAA-1087).